The chain runs to 156 residues: Small ribosomal subunit protein uS7 (156 aa).

This sequence belongs to the universal ribosomal protein uS7 family. In terms of assembly, part of the 30S ribosomal subunit. Contacts proteins S9 and S11.

Its function is as follows. One of the primary rRNA binding proteins, it binds directly to 16S rRNA where it nucleates assembly of the head domain of the 30S subunit. Is located at the subunit interface close to the decoding center, probably blocks exit of the E-site tRNA. This is Small ribosomal subunit protein uS7 from Thermomicrobium roseum (strain ATCC 27502 / DSM 5159 / P-2).